We begin with the raw amino-acid sequence, 88 residues long: Phosphocarrier protein HPr (88 aa).

The 87-residue stretch at Ala2–Glu88 folds into the HPr domain. Ser12 bears the Phosphoserine mark. His15 (pros-phosphohistidine intermediate; alternate) is an active-site residue. Position 15 is a tele-phosphohistidine; alternate (His15). Position 46 is a phosphoserine; by HPrK/P (Ser46).

Belongs to the HPr family. In terms of processing, phosphorylated during sporulation.

It localises to the cytoplasm. Phosphorylation on Ser-46 inhibits the phosphoryl transfer from enzyme I to HPr. In terms of biological role, general (non sugar-specific) component of the phosphoenolpyruvate-dependent sugar phosphotransferase system (sugar PTS). This major carbohydrate active-transport system catalyzes the phosphorylation of incoming sugar substrates concomitantly with their translocation across the cell membrane. The phosphoryl group from phosphoenolpyruvate (PEP) is transferred to the phosphoryl carrier protein HPr by enzyme I. Phospho-HPr then transfers it to the PTS EIIA domain. P-Ser-HPr interacts with the catabolite control protein A (CcpA), forming a complex that binds to DNA at the catabolite response elements cre, operator sites preceding a large number of catabolite-regulated genes. Thus, P-Ser-HPr is a corepressor in carbon catabolite repression (CCR), a mechanism that allows bacteria to coordinate and optimize the utilization of available carbon sources. P-Ser-HPr also plays a role in inducer exclusion, in which it probably interacts with several non-PTS permeases and inhibits their transport activity. This is Phosphocarrier protein HPr (ptsH) from Bacillus subtilis (strain 168).